Here is a 72-residue protein sequence, read N- to C-terminus: Sec-independent protein translocase protein TatA (72 aa).

Residues Met1 to Gly21 traverse the membrane as a helical segment. The segment at Met43–Ser72 is disordered. Positions Glu50 to Ser72 are enriched in basic and acidic residues.

The protein belongs to the TatA/E family. In terms of assembly, the Tat system comprises two distinct complexes: a TatABC complex, containing multiple copies of TatA, TatB and TatC subunits, and a separate TatA complex, containing only TatA subunits. Substrates initially bind to the TatABC complex, which probably triggers association of the separate TatA complex to form the active translocon.

It localises to the cell inner membrane. Its function is as follows. Part of the twin-arginine translocation (Tat) system that transports large folded proteins containing a characteristic twin-arginine motif in their signal peptide across membranes. TatA could form the protein-conducting channel of the Tat system. The protein is Sec-independent protein translocase protein TatA of Brucella suis biovar 1 (strain 1330).